Here is a 206-residue protein sequence, read N- to C-terminus: Adenine phosphoribosyltransferase (206 aa).

Belongs to the purine/pyrimidine phosphoribosyltransferase family. As to quaternary structure, homodimer.

It localises to the cytoplasm. The catalysed reaction is AMP + diphosphate = 5-phospho-alpha-D-ribose 1-diphosphate + adenine. Its pathway is purine metabolism; AMP biosynthesis via salvage pathway; AMP from adenine: step 1/1. Catalyzes a salvage reaction resulting in the formation of AMP, that is energically less costly than de novo synthesis. In Burkholderia mallei (strain NCTC 10229), this protein is Adenine phosphoribosyltransferase.